Consider the following 219-residue polypeptide: MALPRPLLLELLLYGSCFICGIITAASVTISQGSFDGKCMLYGSVRLNSSTIDVLSFSSLSLCYFVSAISVCVAVFCFSLTLYWIYIAFVDGEIKREKLWMNVTLGLSGVFLFFLLVTGCILKIGRDRLCDSLLHTVSNITRCEEAQNKSWRSPINASQFYTRLHSAETAVWVNFFFWMIIVVLVLIQRHKGSEIRPGTEDPSAPPSETEPFFNRPGRP.

A run of 4 helical transmembrane segments spans residues 6–26 (PLLL…ITAA), 69–89 (ISVC…YIAF), 105–125 (LGLS…LKIG), and 167–187 (AETA…LVLI). A disordered region spans residues 195–219 (IRPGTEDPSAPPSETEPFFNRPGRP).

It belongs to the TMEM179 family.

The protein resides in the membrane. This is Transmembrane protein 179B (tmem179b) from Danio rerio (Zebrafish).